The sequence spans 283 residues: Pantothenate synthetase (283 aa).

An ATP-binding site is contributed by 26 to 33 (MGNLHEGH). The Proton donor role is filled by His-33. Gln-57 contacts (R)-pantoate. Gln-57 is a beta-alanine binding site. 148–151 (GKKD) provides a ligand contact to ATP. (R)-pantoate is bound at residue Gln-154. Residue 185 to 188 (LSSR) coordinates ATP.

The protein belongs to the pantothenate synthetase family. Homodimer.

The protein resides in the cytoplasm. The catalysed reaction is (R)-pantoate + beta-alanine + ATP = (R)-pantothenate + AMP + diphosphate + H(+). It functions in the pathway cofactor biosynthesis; (R)-pantothenate biosynthesis; (R)-pantothenate from (R)-pantoate and beta-alanine: step 1/1. Its function is as follows. Catalyzes the condensation of pantoate with beta-alanine in an ATP-dependent reaction via a pantoyl-adenylate intermediate. The chain is Pantothenate synthetase from Polaromonas naphthalenivorans (strain CJ2).